Consider the following 154-residue polypeptide: UPF0178 protein Gbem_2221 (154 aa).

It belongs to the UPF0178 family.

In Citrifermentans bemidjiense (strain ATCC BAA-1014 / DSM 16622 / JCM 12645 / Bem) (Geobacter bemidjiensis), this protein is UPF0178 protein Gbem_2221.